A 59-amino-acid chain; its full sequence is uncharacterized protein (59 aa).

This is an uncharacterized protein from Archaeoglobus fulgidus (strain ATCC 49558 / DSM 4304 / JCM 9628 / NBRC 100126 / VC-16).